Consider the following 299-residue polypeptide: Putative fructokinase (299 aa).

Position 130 (Thr-130) interacts with ATP. Zn(2+)-binding residues include His-153, Cys-168, His-171, and Cys-174. ATP contacts are provided by residues Pro-182 and 230–234 (GVMQQ).

This sequence belongs to the ROK (NagC/XylR) family. The cofactor is Mg(2+).

The enzyme catalyses D-fructose + ATP = D-fructose 6-phosphate + ADP + H(+). With respect to regulation, inhibited by zinc ions. Seems to be involved in the degradation of glucomannan. This is Putative fructokinase (gmuE) from Bacillus subtilis (strain 168).